The chain runs to 96 residues: Putative pterin-4-alpha-carbinolamine dehydratase (96 aa).

It belongs to the pterin-4-alpha-carbinolamine dehydratase family.

The enzyme catalyses (4aS,6R)-4a-hydroxy-L-erythro-5,6,7,8-tetrahydrobiopterin = (6R)-L-erythro-6,7-dihydrobiopterin + H2O. The polypeptide is Putative pterin-4-alpha-carbinolamine dehydratase (Prochlorococcus marinus (strain MIT 9312)).